A 348-amino-acid polypeptide reads, in one-letter code: Putative S-adenosyl-L-methionine-dependent methyltransferase Mb3432 (348 aa).

Residues Asp-171 and Asp-200–Leu-201 each bind S-adenosyl-L-methionine.

This sequence belongs to the UPF0677 family.

In terms of biological role, exhibits S-adenosyl-L-methionine-dependent methyltransferase activity. In Mycobacterium bovis (strain ATCC BAA-935 / AF2122/97), this protein is Putative S-adenosyl-L-methionine-dependent methyltransferase Mb3432.